An 8545-amino-acid polypeptide reads, in one-letter code: Nuclear anchorage protein 1 (8545 aa).

Residues methionine 1–arginine 325 are actin-binding. At methionine 1 to arginine 8494 the chain is on the cytoplasmic side. The region spanning lysine 23–glutamine 130 is the Calponin-homology (CH) 1 domain. A disordered region spans residues threonine 148–proline 197. The span at valine 159–glycine 190 shows a compositional bias: low complexity. One can recognise a Calponin-homology (CH) 2 domain in the interval glutamine 222–glycine 328. 19 coiled-coil regions span residues asparagine 754 to arginine 774, serine 1072 to histidine 1101, alanine 1215 to alanine 1236, aspartate 1324 to aspartate 1384, arginine 1574 to lysine 1629, glutamate 1725 to alanine 1754, proline 1950 to glutamine 1981, aspartate 2103 to aspartate 2580, serine 2682 to lysine 2712, isoleucine 2852 to lysine 2949, aspartate 3002 to valine 3119, aspartate 3178 to lysine 3295, glutamine 3346 to aspartate 3417, aspartate 3482 to leucine 3552, lysine 3587 to aspartate 3703, alanine 3781 to leucine 3839, alanine 3902 to valine 4022, leucine 4114 to lysine 4198, and glutamine 4249 to aspartate 4320. Over residues glutamate 3010–serine 3019 the composition is skewed to basic and acidic residues. Residues glutamate 3010–glutamate 3033 are disordered. A run of 6 repeats spans residues glutamine 3241–proline 4143, glutamine 4144–proline 5097, glutamine 5098–proline 6000, glutamine 6001–proline 6903, glutamine 6904–proline 7806, and glutamine 7807–alanine 8199. The interval glutamine 3241–alanine 8199 is 6 X tandem repeat. The span at glutamate 3913 to serine 3922 shows a compositional bias: basic and acidic residues. A disordered region spans residues glutamate 3913 to glutamate 3936. Residues isoleucine 4372–arginine 4393 are compositionally biased toward basic and acidic residues. The segment at isoleucine 4372 to threonine 4395 is disordered. Coiled coils occupy residues aspartate 4436–leucine 4506, lysine 4541–aspartate 4657, alanine 4735–leucine 4793, alanine 4856–valine 4976, aspartate 5035–lysine 5152, glutamine 5203–aspartate 5274, aspartate 5339–leucine 5409, lysine 5444–aspartate 5560, alanine 5638–leucine 5696, alanine 5759–valine 5879, aspartate 5938–lysine 6055, glutamine 6106–aspartate 6177, aspartate 6242–leucine 6312, lysine 6347–aspartate 6463, alanine 6541–leucine 6599, alanine 6662–valine 6782, aspartate 6841–lysine 6958, glutamine 7009–aspartate 7080, aspartate 7145–leucine 7215, lysine 7250–aspartate 7366, alanine 7444–leucine 7502, alanine 7565–valine 7685, aspartate 7744–lysine 7861, glutamine 7912–aspartate 7983, aspartate 8048–leucine 8118, lysine 8153–arginine 8204, valine 8273–asparagine 8329, and serine 8370–glutamate 8390. A compositionally biased stretch (basic and acidic residues) spans glutamate 4867–serine 4876. Residues glutamate 4867–glutamate 4890 form a disordered region. The segment covering glutamate 5770–serine 5779 has biased composition (basic and acidic residues). The disordered stretch occupies residues glutamate 5770–glutamate 5793. Residues glutamate 6673–serine 6682 show a composition bias toward basic and acidic residues. The tract at residues glutamate 6673 to glutamate 6696 is disordered. Positions glutamate 7576 to serine 7585 are enriched in basic and acidic residues. The interval glutamate 7576–glutamate 7599 is disordered. 2 disordered regions span residues proline 8391 to aspartate 8418 and serine 8449 to glutamate 8480. Positions aspartate 8401–glycine 8411 are enriched in acidic residues. A compositionally biased stretch (basic and acidic residues) spans serine 8451 to serine 8464. The KASH domain occupies arginine 8486 to phenylalanine 8545. Residues threonine 8495–valine 8513 traverse the membrane as a helical; Anchor for type IV membrane protein segment. Residues proline 8514 to phenylalanine 8545 are Perinuclear space-facing.

This sequence belongs to the nesprin family. As to quaternary structure, interacts with F-actin via its N-terminal domain. Most likely interacts with unc-84; the interaction is probably required to recruit anc-1 to the nuclear envelope. In terms of tissue distribution, ubiquitously expressed in all postembryonic cells.

It localises to the nucleus outer membrane. The protein resides in the cytoplasm. The protein localises to the cytoskeleton. Functionally, plays a central role in nuclear and mitochondrial anchoring. Probably connects nuclei to the cytoskeleton by interacting with unc-84 at the nuclear envelope and with F-actin in the cytoplasm, creating a bridge across the nuclear envelope between the cytoskeleton and the nucleus. Has a role in positioning of the cell body of the PVQ lumbar interneuron. The chain is Nuclear anchorage protein 1 from Caenorhabditis elegans.